Reading from the N-terminus, the 591-residue chain is Complement component C8 beta chain (591 aa).

A signal peptide spans 1–32 (MKNSRTWAWRAPVELFLLCAALGCLSLPGSRG). Positions 33 to 54 (ERPHSFGSNAVNKSFAKSRQMR) are excised as a propeptide. The region spanning 64-117 (DCELSSWSSWTTCDPCQKKRYRYAYLLQPSQFHGEPCNFSDKEVEDCVTNRPCG) is the TSP type-1 1 domain. Disulfide bonds link Cys-65–Cys-100, Cys-76–Cys-110, Cys-79–Cys-116, Cys-122–Cys-133, Cys-127–Cys-146, Cys-140–Cys-155, and Cys-162–Cys-200. C-linked (Man) tryptophan glycosylation is found at Trp-70 and Trp-73. An N-linked (GlcNAc...) asparagine glycan is attached at Asn-101. Residues 120–157 (VRCEGFVCAQTGRCVNRRLLCNGDNDCGDQSDEANCRR) form the LDL-receptor class A domain. Positions 138, 141, 143, 145, 151, and 152 each coordinate Ca(2+). Residues 158-504 (IYKKCQHEMD…EFQKEVSSCH (347 aa)) form the MACPF domain. N-linked (GlcNAc...) asparagine glycosylation occurs at Asn-243. 4 beta stranded membrane passes run 252–259 (SGFSFGFK), 262–269 (GIFELGIS), 379–386 (AKNDFKIG), and 392–399 (VYVSLGVS). Cys-378 and Cys-403 are oxidised to a cystine. Position 418 is a phosphothreonine (Thr-418). 4 disulfide bridges follow: Cys-503–Cys-550, Cys-505–Cys-521, Cys-508–Cys-523, and Cys-525–Cys-534. One can recognise an EGF-like domain in the interval 505–535 (CAPCQGNGVPVLKGSRCDCICPVGSQGLACE). One can recognise a TSP type-1 2 domain in the interval 545-591 (DGKWNCWSNWSSCSGRRKTRQRQCNNPPPQNGGSPCSGPASETLDCS). 2 C-linked (Man) tryptophan glycosylation sites follow: Trp-551 and Trp-554. A disulfide bridge links Cys-557 with Cys-590. The interval 568 to 591 (CNNPPPQNGGSPCSGPASETLDCS) is disordered.

It belongs to the complement C6/C7/C8/C9 family. As to quaternary structure, heterotrimer of 3 chains: alpha (C8A), beta (C8B) and gamma (C8G); the alpha and gamma chains are disulfide bonded. Component of the membrane attack complex (MAC), composed of complement C5b, C6, C7, C8A, C8B, C8G and multiple copies of the pore-forming subunit C9. Post-translationally, N-glycosylated; contains one or two bound glycans. Not O-glycosylated.

It localises to the secreted. The protein resides in the target cell membrane. Its activity is regulated as follows. Membrane attack complex (MAC) assembly is inhibited by CD59, thereby protecting self-cells from damage during complement activation. CD59 acts by binding to the beta-haipins of C8 (C8A and C8B), forming an intermolecular beta-sheet that prevents incorporation of the multiple copies of C9 required for complete formation of the osmolytic pore. MAC assembly is also inhibited by clusterin (CLU) chaperones that inhibit polymerization of C9. In terms of biological role, component of the membrane attack complex (MAC), a multiprotein complex activated by the complement cascade, which inserts into a target cell membrane and forms a pore, leading to target cell membrane rupture and cell lysis. The MAC is initiated by proteolytic cleavage of C5 into complement C5b in response to the classical, alternative, lectin and GZMK complement pathways. The complement pathways consist in a cascade of proteins that leads to phagocytosis and breakdown of pathogens and signaling that strengthens the adaptive immune system. C8B, together with C8A and C8G, inserts into the target membrane, but does not form pores by itself. During MAC assembly, associates with C5b, C6 and C7 to form the C5b8 intermediate complex that inserts into the target membrane and traverses the bilayer increasing membrane rigidity. The sequence is that of Complement component C8 beta chain from Homo sapiens (Human).